The sequence spans 484 residues: Glutathione reductase (484 aa).

FAD-binding residues include serine 32 and glycine 33. Serine 32 contributes to the glutathione binding site. Arginine 39 lines the glutathione pocket. Residues glutamate 52, threonine 59, cysteine 60, and lysine 68 each coordinate FAD. An intrachain disulfide couples cysteine 60 to cysteine 65. Tyrosine 122 contributes to the glutathione binding site. Position 138 (alanine 138) interacts with FAD. Residues alanine 204, isoleucine 207, glutamate 210, arginine 227, and arginine 233 each coordinate NADP(+). Threonine 242 provides a ligand contact to glutathione. Glycine 293 serves as a coordination point for NADP(+). Aspartate 333 contacts FAD. Position 339 (glutamate 339) interacts with NADP(+). Threonine 341 serves as a coordination point for FAD. Arginine 349 lines the glutathione pocket. NADP(+) is bound at residue valine 374. Lysine 426 contributes to the glutathione binding site. Histidine 473 is a binding site for FAD. Catalysis depends on histidine 473, which acts as the Proton acceptor.

Belongs to the class-I pyridine nucleotide-disulfide oxidoreductase family. In terms of assembly, homodimer. Requires FAD as cofactor.

It is found in the cytoplasm. It localises to the mitochondrion. It carries out the reaction 2 glutathione + NADP(+) = glutathione disulfide + NADPH + H(+). Functionally, catalyzes the reduction of glutathione disulfide (GSSG) to reduced glutathione (GSH). Constitutes the major mechanism to maintain a high GSH:GSSG ratio in the cytosol. The polypeptide is Glutathione reductase (GLR1) (Kluyveromyces lactis (strain ATCC 8585 / CBS 2359 / DSM 70799 / NBRC 1267 / NRRL Y-1140 / WM37) (Yeast)).